Reading from the N-terminus, the 169-residue chain is Large ribosomal subunit protein bL9 (169 aa).

The protein belongs to the bacterial ribosomal protein bL9 family.

In terms of biological role, binds to the 23S rRNA. The polypeptide is Large ribosomal subunit protein bL9 (Chlamydia pneumoniae (Chlamydophila pneumoniae)).